Consider the following 1104-residue polypeptide: MSFEGARLSMRSRRNGTMGSTRTLYSSVSRSTDVSYSDSDLVNFIQANFKKRECVFFTRDSKAMENICKCGYAQSQHIEGTQINQNEKWNYKKHTKEFPTDAFGDIQFETLGKKGKYLRLSCDTDSETLYELLTQHWHLKTPNLVISVTGGAKNFALKPRMRKIFSRLIYIAQSKGAWILTGGTHYGLMKYIGEVVRDNTISRNSEENIVAIGIAAWGMVSNRDTLIRSCDDEGHFSAQYIMDDFTRDPLYILDNNHTHLLLVDNGCHGHPTVEAKLRNQLEKYISERTSQDSNYGGKIPIVCFAQGGGRETLKAINTSVKSKIPCVVVEGSGQIADVIASLVEVEDVLTSSMVKEKLVRFLPRTVSRLPEEEIESWIKWLKEILESSHLLTVIKMEEAGDEIVSNAISYALYKAFSTNEQDKDNWNGQLKLLLEWNQLDLASDEIFTNDRRWESADLQEVMFTALIKDRPKFVRLFLENGLNLQKFLTNEVLTELFSTHFSTLVYRNLQIAKNSYNDALLTFVWKLVANFRRSFWKEDRSSREDLDVELHDASLTTRHPLQALFIWAILQNKKELSKVIWEQTKGCTLAALGASKLLKTLAKVKNDINAAGESEELANEYETRAVELFTECYSNDEDLAEQLLVYSCEAWGGSNCLELAVEATDQHFIAQPGVQNFLSKQWYGEISRDTKNWKIILCLFIIPLVGCGLVSFRKKPIDKHKKLLWYYVAFFTSPFVVFSWNVVFYIAFLLLFAYVLLMDFHSVPHTPELILYALVFVLFCDEVRQWYMNGVNYFTDLWNVMDTLGLFYFIAGIVFRLHSSNKSSLYSGRVIFCLDYIIFTLRLIHIFTVSRNLGPKIIMLQRMLIDVFFFLFLFAVWMVAFGVARQGILRQNEQRWRWIFRSVIYEPYLAMFGQVPSDVDSTTYDFSHCTFSGNESKPLCVELDEHNLPRFPEWITIPLVCIYMLSTNILLVNLLVAMFGYTVGIVQENNDQVWKFQRYFLVQEYCNRLNIPFPFVVFAYFYMVVKKCFKCCCKEKNMESNACCFRNEDNETLAWEGVMKENYLVKINTKANDNSEEMRHRFRQLDSKLNDLKSLLKEIANNIK.

The tract at residues 1-22 (MSFEGARLSMRSRRNGTMGSTR) is disordered. The Cytoplasmic portion of the chain corresponds to 1-733 (MSFEGARLSM…LWYYVAFFTS (733 aa)). A helical transmembrane segment spans residues 734 to 758 (PFVVFSWNVVFYIAFLLLFAYVLLM). The Extracellular portion of the chain corresponds to 759-765 (DFHSVPH). Residues 766–789 (TPELILYALVFVLFCDEVRQWYMN) form a helical membrane-spanning segment. Ca(2+)-binding residues include E782 and Q785. Residues 790–796 (GVNYFTD) are Cytoplasmic-facing. The helical transmembrane segment at 797–817 (LWNVMDTLGLFYFIAGIVFRL) threads the bilayer. 2 residues coordinate Ca(2+): N799 and D802. Residues 818–822 (HSSNK) lie on the Extracellular side of the membrane. A helical transmembrane segment spans residues 823–848 (SSLYSGRVIFCLDYIIFTLRLIHIFT). Topologically, residues 849-853 (VSRNL) are cytoplasmic. The helical transmembrane segment at 854 to 890 (GPKIIMLQRMLIDVFFFLFLFAVWMVAFGVARQGILR) threads the bilayer. The Extracellular segment spans residues 891-895 (QNEQR). An intramembrane region (pore-forming) is located at residues 896–912 (WRWIFRSVIYEPYLAMF). The Extracellular segment spans residues 913-953 (GQVPSDVDSTTYDFSHCTFSGNESKPLCVELDEHNLPRFPE). An N-linked (GlcNAc...) (complex) asparagine glycan is attached at N934. Residues 954-984 (WITIPLVCIYMLSTNILLVNLLVAMFGYTVG) traverse the membrane as a helical segment. Over 985-1104 (IVQENNDQVW…LLKEIANNIK (120 aa)) the chain is Cytoplasmic. Residues 1069 to 1104 (TKANDNSEEMRHRFRQLDSKLNDLKSLLKEIANNIK) adopt a coiled-coil conformation.

The protein belongs to the transient receptor (TC 1.A.4) family. LTrpC subfamily. TRPM8 sub-subfamily. As to quaternary structure, homotetramer. Interacts (via N-terminus and C-terminus domains) with TCAF1; the interaction stimulates TRPM8 channel activity. Interacts (via N-terminus and C-terminus domains) with TCAF2; the interaction inhibits TRPM8 channel activity. In terms of processing, N-glycosylation is not essential for but facilitates cell surface expression, multimerization, association with lipid rafts and ion channel activity. Expressed in dorsal root and trigeminal ganglia. Specifically expressed in a subset of pain- and temperature-sensing neurons. Not expressed in heavily myelinated neurons. Not expressed in neurons expressing TRPA1 or TRPV1.

The protein localises to the cell membrane. The protein resides in the membrane raft. It carries out the reaction Ca(2+)(in) = Ca(2+)(out). The enzyme catalyses Na(+)(in) = Na(+)(out). The catalysed reaction is K(+)(in) = K(+)(out). Activated by cold temperatures and by both natural and synthetic cooling compounds such as menthol and icilin. Activation of the channel requires the presence of PI(4,5)P2; PI(4,5)P2 is necessary to gate the channel. Activated by intracellular Ca(2+). Its function is as follows. Non-selective ion channel permeable to monovalent and divalent cations, including Na(+), K(+), and Ca(2+), with higher permeability for Ca(2+). Activated by multiple factors, such as temperature, voltage, pressure, and changes in osmolality. Activated by cool temperatures (&lt;23-28 degrees Celsius) and by chemical ligands evoking a sensation of coolness, such as menthol and icilin, therefore plays a central role in the detection of environmental cold temperatures. TRPM8 is a voltage-dependent channel; its activation by cold or chemical ligands shifts its voltage thresholds towards physiological membrane potentials, leading to the opening of the channel. In addition to its critical role in temperature sensing, regulates basal tear secretion by sensing evaporation-induced cooling and changes in osmolality. The protein is Transient receptor potential cation channel subfamily M member 8 (Trpm8) of Mus musculus (Mouse).